The chain runs to 123 residues: WAP four-disulfide core domain protein 5 (123 aa).

Positions 1–24 (MRIQSLLLLGALLAVGSQLPAVFG) are cleaved as a signal peptide. 2 consecutive WAP domains span residues 27–73 (KGEK…CVPR) and 74–121 (VSVK…RDPA). Cystine bridges form between C34–C62, C41–C66, C49–C61, C55–C70, C81–C109, C88–C113, C96–C108, and C102–C117.

The protein resides in the secreted. Its function is as follows. Putative acid-stable proteinase inhibitor. In Pongo abelii (Sumatran orangutan), this protein is WAP four-disulfide core domain protein 5 (WFDC5).